The chain runs to 324 residues: uncharacterized protein (324 aa).

This is an uncharacterized protein from Methanocaldococcus jannaschii (strain ATCC 43067 / DSM 2661 / JAL-1 / JCM 10045 / NBRC 100440) (Methanococcus jannaschii).